A 368-amino-acid chain; its full sequence is tRNA(Met) cytidine acetate ligase (368 aa).

Residues 7 to 20 (IAEF…HKYL), Gly-96, Asn-152, and Arg-175 contribute to the ATP site.

This sequence belongs to the TmcAL family.

The protein localises to the cytoplasm. It carries out the reaction cytidine(34) in elongator tRNA(Met) + acetate + ATP = N(4)-acetylcytidine(34) in elongator tRNA(Met) + AMP + diphosphate. Functionally, catalyzes the formation of N(4)-acetylcytidine (ac(4)C) at the wobble position of elongator tRNA(Met), using acetate and ATP as substrates. First activates an acetate ion to form acetyladenylate (Ac-AMP) and then transfers the acetyl group to tRNA to form ac(4)C34. This Streptococcus pyogenes serotype M49 (strain NZ131) protein is tRNA(Met) cytidine acetate ligase.